The primary structure comprises 230 residues: MIIMISVILVNPKYSGNVGSIARVMMNFGFEELRIVGDKSIINNEAYMMAVHAREILDNAKFYNTFDEAIGDLDFVIATSGARGGDRNLKRVPITPKELADKILEVKGNIGIVFGREDDGLRNEEIDKCDLLVSIPTSEKYPIMNLSHAVAVILYEIYTKKVRNKFLDINMREASKEDKELLIRKFNEFIDKNEKIPEHKKELCKIIFKRLVNRAFISGKEAWTLMSAFK.

S-adenosyl-L-methionine contacts are provided by residues Thr79–Gly81, Gly115, Ile135, and Pro142–Met144.

It belongs to the class IV-like SAM-binding methyltransferase superfamily. RNA methyltransferase TrmH family. As to quaternary structure, homodimer.

It is found in the cytoplasm. The enzyme catalyses cytidine(32) in tRNA + S-adenosyl-L-methionine = 2'-O-methylcytidine(32) in tRNA + S-adenosyl-L-homocysteine + H(+). Catalyzes the formation of 2'O-methylated cytidine (Cm32) at position 32 in tRNA. The sequence is that of tRNA (cytidine-2'-O-)-methyltransferase TrmJ from Methanocaldococcus jannaschii (strain ATCC 43067 / DSM 2661 / JAL-1 / JCM 10045 / NBRC 100440) (Methanococcus jannaschii).